The chain runs to 317 residues: 17-beta-hydroxysteroid dehydrogenase type 6 (317 aa).

The N-terminal stretch at Met1 to Trp17 is a signal peptide. Phe33–Leu57 is an NAD(+) binding site. Asn161 carries N-linked (GlcNAc...) asparagine glycosylation. Residue Ser164 participates in substrate binding. Catalysis depends on Tyr176, which acts as the Proton acceptor. Asn215 and Asn256 each carry an N-linked (GlcNAc...) asparagine glycan.

The protein belongs to the short-chain dehydrogenases/reductases (SDR) family. In terms of tissue distribution, detected in liver and prostate (at protein level). Detected in adult liver, lung, brain, placenta, prostate, adrenal gland, testis, mammary gland, spleen, spinal cord and uterus. Detected in caudate nucleus, and at lower levels in amygdala, corpus callosum, hippocampus, substantia nigra and thalamus. Detected in fetal lung, liver and brain.

Its subcellular location is the microsome membrane. It localises to the early endosome membrane. The catalysed reaction is all-trans-retinol--[retinol-binding protein] + NAD(+) = all-trans-retinal--[retinol-binding protein] + NADH + H(+). It catalyses the reaction all-trans-retinol + NAD(+) = all-trans-retinal + NADH + H(+). It carries out the reaction androsterone + NAD(+) = 5alpha-androstan-3,17-dione + NADH + H(+). The enzyme catalyses testosterone + NAD(+) = androst-4-ene-3,17-dione + NADH + H(+). The catalysed reaction is 5alpha-androstane-3alpha,17beta-diol + NAD(+) = 17beta-hydroxy-5alpha-androstan-3-one + NADH + H(+). It catalyses the reaction 17beta-estradiol + NAD(+) = estrone + NADH + H(+). It carries out the reaction 17beta-estradiol + NADP(+) = estrone + NADPH + H(+). The enzyme catalyses 3alpha-hydroxy-5alpha-pregnan-20-one + NAD(+) = 5alpha-pregnane-3,20-dione + NADH + H(+). The catalysed reaction is 5alpha-androstane-3beta,17beta-diol + NAD(+) = 17beta-hydroxy-5alpha-androstan-3-one + NADH + H(+). It catalyses the reaction 3beta-hydroxy-5alpha-androstan-17-one + NAD(+) = 5alpha-androstan-3,17-dione + NADH + H(+). In terms of biological role, NAD-dependent oxidoreductase with broad substrate specificity that shows both oxidative and reductive activity (in vitro). Has 17-beta-hydroxysteroid dehydrogenase activity towards various steroids (in vitro). Converts 5-alpha-androstan-3-alpha,17-beta-diol to androsterone and estradiol to estrone (in vitro). Has 3-alpha-hydroxysteroid dehydrogenase activity towards androsterone (in vitro). Has retinol dehydrogenase activity towards all-trans-retinol (in vitro). Can convert androsterone to epi-androsterone. Androsterone is first oxidized to 5-alpha-androstane-3,17-dione and then reduced to epi-andosterone. Can act on both C-19 and C-21 3-alpha-hydroxysteroids. This is 17-beta-hydroxysteroid dehydrogenase type 6 (HSD17B6) from Homo sapiens (Human).